The chain runs to 558 residues: Cytochrome c oxidase subunit 1-beta (558 aa).

Residues 1-28 (MADAAVHGHGDHHDTRGFFTRWFMSTNH) are Cytoplasmic-facing. The chain crosses the membrane as a helical span at residues 29 to 59 (KDIGILYLFTAGIVGLISVCFTVYMRMELQH). At 60 to 82 (PGVQYMCLEGARLIADASAECTP) the chain is on the periplasmic side. Cys66 and Cys80 form a disulfide bridge. The helical transmembrane segment at 83-120 (NGHLWNVMITYHGVLMMFFVVIPALFGGFGNYFMPLHI) threads the bilayer. His94 lines the Fe(II)-heme a pocket. At 121 to 126 (GAPDMA) the chain is on the cytoplasmic side. A helical membrane pass occupies residues 127-151 (FPRLNNLSYWMYVCGVALGVASLLA). Over 152-176 (PGGNDQMGSGVGWVLYPPLSTTEAG) the chain is Periplasmic. Residues 177 to 206 (YSMDLAIFAVHVSGASSILGAINIITTFLN) traverse the membrane as a helical segment. Residues 207-217 (MRAPGMTLFKV) are Cytoplasmic-facing. Residues 218-251 (PLFAWSVFITAWLILLSLPVLAGAITMLLMDRNF) form a helical membrane-spanning segment. At 252-262 (GTQFFDPAGGG) the chain is on the periplasmic side. Residues 263 to 299 (DPVLYQHILWFFGHPEVYIIILPGFGIISHVISTFAK) form a helical membrane-spanning segment. Cu cation-binding residues include His276 and Tyr280. The segment at residues 276–280 (HPEVY) is a cross-link (1'-histidyl-3'-tyrosine (His-Tyr)). The Cytoplasmic segment spans residues 300–303 (KPIF). The helical transmembrane segment at 304-331 (GYLPMVLAMAAIGILGFVVWAHHMYTAG) threads the bilayer. Positions 325 and 326 each coordinate Cu cation. Met332 is a topological domain (periplasmic). A helical membrane pass occupies residues 333–364 (SLTQQAYFMLATMTIAVPTGIKVFSWIATMWG). The Cytoplasmic portion of the chain corresponds to 365 to 369 (GSIEF). A helical membrane pass occupies residues 370–395 (KTPMLWAFGFLFLFTVGGVTGVVLSQ). Over 396–404 (APLDRVYHD) the chain is Periplasmic. A helical membrane pass occupies residues 405–437 (TYYVVAHFHYVMSLGAVFGIFAGVYYWIGKMSG). His411 lines the heme a3 pocket. His413 contacts Fe(II)-heme a. At 438–440 (RQY) the chain is on the cytoplasmic side. The chain crosses the membrane as a helical span at residues 441 to 469 (PEWAGQLHFWMMFIGSNLIFFPQHFLGRQ). The Periplasmic segment spans residues 470-478 (GMPRRYIDY). A helical membrane pass occupies residues 479-514 (PVEFAYWNNISSIGAYISFASFLFFIGIVFYTLFAG). Over 515–558 (KRVNVPNYWNEHADTLEWTLPSPPPEHTFETLPKREDWDRAHAH) the chain is Cytoplasmic.

It belongs to the heme-copper respiratory oxidase family. Cu(2+) serves as cofactor. Requires heme as cofactor. In terms of processing, his-276 and Tyr-280 are involved in the formation of a copper-coordinated covalent cross-link at the active site of the catalytic subunit I.

The protein resides in the cell inner membrane. The catalysed reaction is 4 Fe(II)-[cytochrome c] + O2 + 8 H(+)(in) = 4 Fe(III)-[cytochrome c] + 2 H2O + 4 H(+)(out). Its pathway is energy metabolism; oxidative phosphorylation. Its function is as follows. Subunit I and II form the functional core of the enzyme complex. Electrons originating in cytochrome c are transferred via heme a and Cu(A) to the binuclear center formed by heme a3 and Cu(B). This cytochrome c oxidase shows proton pump activity across the membrane in addition to the electron transfer. The chain is Cytochrome c oxidase subunit 1-beta (ctaDII) from Paracoccus denitrificans.